A 72-amino-acid chain; its full sequence is Translation initiation factor IF-1 (72 aa).

One can recognise an S1-like domain in the interval 1 to 72 (MSKEGKITLK…TRGRIIYRIS (72 aa)).

Belongs to the IF-1 family. As to quaternary structure, component of the 30S ribosomal translation pre-initiation complex which assembles on the 30S ribosome in the order IF-2 and IF-3, IF-1 and N-formylmethionyl-tRNA(fMet); mRNA recruitment can occur at any time during PIC assembly.

The protein resides in the cytoplasm. Functionally, one of the essential components for the initiation of protein synthesis. Stabilizes the binding of IF-2 and IF-3 on the 30S subunit to which N-formylmethionyl-tRNA(fMet) subsequently binds. Helps modulate mRNA selection, yielding the 30S pre-initiation complex (PIC). Upon addition of the 50S ribosomal subunit IF-1, IF-2 and IF-3 are released leaving the mature 70S translation initiation complex. This chain is Translation initiation factor IF-1, found in Malacoplasma penetrans (strain HF-2) (Mycoplasma penetrans).